The sequence spans 272 residues: MLRIQALTKTYKNGEAALRGVSLSVGAGEIIGLIGPSGAGKSTLIRCVNRLIEPSSGRVQLGEVELTGLSSGALRRERRRIGMIFQEYALIERLTVMENVLAGRLGYTGFWNSWFRRFAEQDIQRAIALLERVGLIDHIDKRADALSGGQRQRVGIARALIQQPELLLVDEPTASLDPKTSRSVMRLLTELCIENRLAAIVNIHDVVLAQAFLPRIVGLNAGIVVYDGPASGLTAEVLTSIYGEEDWTRTAAGDGGTDDGEPLIIARMEAAQ.

Residues 2-246 (LRIQALTKTY…VLTSIYGEED (245 aa)) form the ABC transporter domain. 35-42 (GPSGAGKS) is an ATP binding site.

It belongs to the ABC transporter superfamily. Phosphonates importer (TC 3.A.1.9.1) family. The complex is composed of two ATP-binding proteins (PhnC), two transmembrane proteins (PhnE) and a solute-binding protein (PhnD).

It is found in the cell inner membrane. The catalysed reaction is phosphonate(out) + ATP + H2O = phosphonate(in) + ADP + phosphate + H(+). Its function is as follows. Part of the ABC transporter complex PhnCDE involved in phosphonates import. Responsible for energy coupling to the transport system. The protein is Phosphonates import ATP-binding protein PhnC 1 of Rhodopseudomonas palustris (strain BisB18).